A 98-amino-acid chain; its full sequence is Integration host factor subunit alpha (98 aa).

The interval 49-71 is disordered; it reads FGNFDLRDKNQRPGRNPKTGEDI.

It belongs to the bacterial histone-like protein family. As to quaternary structure, heterodimer of an alpha and a beta chain.

Its function is as follows. This protein is one of the two subunits of integration host factor, a specific DNA-binding protein that functions in genetic recombination as well as in transcriptional and translational control. The protein is Integration host factor subunit alpha of Shewanella sp. (strain ANA-3).